We begin with the raw amino-acid sequence, 206 residues long: Large ribosomal subunit protein uL4 (206 aa).

The segment at 46-77 is disordered; it reads GTRAQKDREQVKHSTKKPFKQKGTGNARAGMT.

This sequence belongs to the universal ribosomal protein uL4 family. In terms of assembly, part of the 50S ribosomal subunit.

Functionally, one of the primary rRNA binding proteins, this protein initially binds near the 5'-end of the 23S rRNA. It is important during the early stages of 50S assembly. It makes multiple contacts with different domains of the 23S rRNA in the assembled 50S subunit and ribosome. In terms of biological role, forms part of the polypeptide exit tunnel. The protein is Large ribosomal subunit protein uL4 of Acidovorax ebreus (strain TPSY) (Diaphorobacter sp. (strain TPSY)).